A 316-amino-acid polypeptide reads, in one-letter code: Acetyl-coenzyme A carboxylase carboxyl transferase subunit beta (316 aa).

Positions 39-308 (LWHKCSKCGV…TPPMVLWETM (270 aa)) constitute a CoA carboxyltransferase N-terminal domain. Residues C43, C46, C62, and C65 each contribute to the Zn(2+) site. The C4-type zinc finger occupies 43-65 (CSKCGVLTYTKDLRANQMVCVEC).

It belongs to the AccD/PCCB family. Acetyl-CoA carboxylase is a heterohexamer composed of biotin carboxyl carrier protein (AccB), biotin carboxylase (AccC) and two subunits each of ACCase subunit alpha (AccA) and ACCase subunit beta (AccD). Zn(2+) is required as a cofactor.

The protein localises to the cytoplasm. The enzyme catalyses N(6)-carboxybiotinyl-L-lysyl-[protein] + acetyl-CoA = N(6)-biotinyl-L-lysyl-[protein] + malonyl-CoA. It participates in lipid metabolism; malonyl-CoA biosynthesis; malonyl-CoA from acetyl-CoA: step 1/1. Functionally, component of the acetyl coenzyme A carboxylase (ACC) complex. Biotin carboxylase (BC) catalyzes the carboxylation of biotin on its carrier protein (BCCP) and then the CO(2) group is transferred by the transcarboxylase to acetyl-CoA to form malonyl-CoA. The chain is Acetyl-coenzyme A carboxylase carboxyl transferase subunit beta from Nostoc sp. (strain PCC 7120 / SAG 25.82 / UTEX 2576).